Here is a 246-residue protein sequence, read N- to C-terminus: Ribonuclease PH (246 aa).

Positions 1–33 are disordered; it reads MTPPKLPVREGRDALTPRPVSVQRGVNPHAPGS. Phosphate-binding positions include R90 and 128-130; that span reads GTR.

The protein belongs to the RNase PH family. As to quaternary structure, homohexameric ring arranged as a trimer of dimers.

It carries out the reaction tRNA(n+1) + phosphate = tRNA(n) + a ribonucleoside 5'-diphosphate. Phosphorolytic 3'-5' exoribonuclease that plays an important role in tRNA 3'-end maturation. Removes nucleotide residues following the 3'-CCA terminus of tRNAs; can also add nucleotides to the ends of RNA molecules by using nucleoside diphosphates as substrates, but this may not be physiologically important. Probably plays a role in initiation of 16S rRNA degradation (leading to ribosome degradation) during starvation. In Deinococcus radiodurans (strain ATCC 13939 / DSM 20539 / JCM 16871 / CCUG 27074 / LMG 4051 / NBRC 15346 / NCIMB 9279 / VKM B-1422 / R1), this protein is Ribonuclease PH.